The primary structure comprises 535 residues: Ribonuclease Y (535 aa).

Residues 4-24 (IILLIVSALIGLILGYALISI) traverse the membrane as a helical segment. Positions 118-141 (ENLSSKEKVLDSKEQSLTDKSKHI) are disordered. The 61-residue stretch at 225 to 285 (TITSVHLPDD…IRREIARMTL (61 aa)) folds into the KH domain. Residues 351–444 (VLRHSVEVGK…VAAADALSSA (94 aa)) form the HD domain.

It belongs to the RNase Y family.

The protein localises to the cell membrane. Its function is as follows. Endoribonuclease that initiates mRNA decay. In Streptococcus pyogenes serotype M2 (strain MGAS10270), this protein is Ribonuclease Y.